Here is a 186-residue protein sequence, read N- to C-terminus: Methylamine dehydrogenase light chain (186 aa).

The tat-type signal signal peptide spans 1 to 57 (MLGKSQFDDLFEKMSRKVAGHTSRRGFIGRVGTAVAGVALVPLLPVDRRGRVSRANA). Cystine bridges form between Cys78–Cys143, Cys84–Cys116, Cys91–Cys176, Cys93–Cys141, Cys101–Cys132, and Cys133–Cys164. The residue at position 112 (Trp112) is a Tryptophylquinone. The segment at residues 112-163 (WVASCYNPTDKQSYLISYRDCCGANVSGRCACLNTEGELPVYRPEFGNDIIW) is a cross-link (tryptophan tryptophylquinone (Trp-Trp)).

The protein belongs to the aromatic amine dehydrogenase light chain family. Heterotetramer of two light and two heavy chains. It depends on tryptophan tryptophylquinone residue as a cofactor. Post-translationally, predicted to be exported by the Tat system. The position of the signal peptide cleavage has been experimentally proven. Tryptophan tryptophylquinone (TTQ) is formed by oxidation of the indole ring of a tryptophan to form tryptophylquinone followed by covalent cross-linking with another tryptophan residue.

Its subcellular location is the periplasm. The enzyme catalyses 2 oxidized [amicyanin] + methylamine + H2O = 2 reduced [amicyanin] + formaldehyde + NH4(+) + 2 H(+). The protein operates within one-carbon metabolism; methylamine degradation; formaldehyde from methylamine: step 1/1. Functionally, methylamine dehydrogenase carries out the oxidation of methylamine. Electrons are passed from methylamine dehydrogenase to amicyanin. The sequence is that of Methylamine dehydrogenase light chain (mauA) from Methylorubrum extorquens (strain ATCC 14718 / DSM 1338 / JCM 2805 / NCIMB 9133 / AM1) (Methylobacterium extorquens).